A 451-amino-acid chain; its full sequence is Type 3 secretion system ATPase (451 aa).

An ATP-binding site is contributed by 184 to 189; it reads GGGKST.

The protein belongs to the ATPase alpha/beta chains family. T3SS ATPase subfamily. In terms of assembly, the core secretion machinery of the T3SS is composed of approximately 20 different proteins, including cytoplasmic components, a base, an export apparatus and a needle. This subunit is part of the cytosolic complex. Forms homohexamers.

It is found in the cytoplasm. The enzyme catalyses ATP + H2O + cellular proteinSide 1 = ADP + phosphate + cellular proteinSide 2.. ATPase component of the type III secretion system (T3SS), also called injectisome, which is used to inject bacterial effector proteins into eukaryotic host cells. Acts as a molecular motor to provide the energy that is required for the export of proteins. Required for type III secretion apparatus (T3SA) formation, proper protein secretion, host cell invasion and virulence. May play a critical role in T3SS substrate recognition, disassembly of the effector/chaperone complex and unfolding of the effector in an ATP-dependent manner prior to secretion. The polypeptide is Type 3 secretion system ATPase (Sinorhizobium fredii (strain NBRC 101917 / NGR234)).